A 219-amino-acid polypeptide reads, in one-letter code: Ribose-5-phosphate isomerase A (219 aa).

Substrate is bound by residues 28–31 (TGST), 81–84 (DGAD), and 94–97 (KGGG). The active-site Proton acceptor is Glu103. Lys121 lines the substrate pocket.

This sequence belongs to the ribose 5-phosphate isomerase family. As to quaternary structure, homodimer.

The catalysed reaction is aldehydo-D-ribose 5-phosphate = D-ribulose 5-phosphate. Its pathway is carbohydrate degradation; pentose phosphate pathway; D-ribose 5-phosphate from D-ribulose 5-phosphate (non-oxidative stage): step 1/1. Functionally, catalyzes the reversible conversion of ribose-5-phosphate to ribulose 5-phosphate. In Shewanella oneidensis (strain ATCC 700550 / JCM 31522 / CIP 106686 / LMG 19005 / NCIMB 14063 / MR-1), this protein is Ribose-5-phosphate isomerase A.